Here is a 466-residue protein sequence, read N- to C-terminus: Transcription factor eupR (466 aa).

Residues 1–18 (MFSTEPRSDTAPGSPSCS) are compositionally biased toward polar residues. The interval 1–22 (MFSTEPRSDTAPGSPSCSETKR) is disordered. The zn(2)-C6 fungal-type DNA-binding region spans 32-62 (CWECKRRKVKCSYSNPSDPRCIGCRRRGTKC).

The protein resides in the nucleus. Transcription factor; part of the gene cluster that mediates the biosynthesis of eupenifeldin, a bistropolone meroterpenoid that acts as an antitumor agent. This chain is Transcription factor eupR, found in Phoma sp.